Reading from the N-terminus, the 650-residue chain is Chaperone protein DnaK (650 aa).

T200 is modified (phosphothreonine; by autocatalysis). Residues 612 to 636 (QQAGAAGAAGAAEGAAHAGGAQQAA) are compositionally biased toward low complexity. Residues 612–650 (QQAGAAGAAGAAEGAAHAGGAQQAADDVVDAEFKEVKKD) form a disordered region.

The protein belongs to the heat shock protein 70 family.

In terms of biological role, acts as a chaperone. The polypeptide is Chaperone protein DnaK (Burkholderia ambifaria (strain ATCC BAA-244 / DSM 16087 / CCUG 44356 / LMG 19182 / AMMD) (Burkholderia cepacia (strain AMMD))).